The sequence spans 427 residues: Sperm-associated antigen 1A (427 aa).

Positions 46–113 are disordered; that stretch reads QKKGPGYREG…GPGSAGESCN (68 aa). TPR repeat units follow at residues 125-158, 167-200, 202-234, 302-335, 336-369, and 371-403; these read LARLKNQGNMLFKNGQFGDALEKYTQAIDGCIEA, CVLYSNRAACFLKDGNSADCIQDCTRALELHPFS, KPLLRRAMAYESLERYRKAYVDYKTVLQIDISV, FTILKQEGNELVKNSQFQGASEKYSECLAIKPNE, CAIYTNRALCFLKLERFAEAKQDCDSALQMEPKN, and KAFYRRALAHKGLKDYLSASTDLQEVLQLDPNV.

The protein localises to the cytoplasm. It localises to the dynein axonemal particle. In terms of biological role, may play a role in the cytoplasmic assembly and/or trafficking of the axonemal dynein arms. The sequence is that of Sperm-associated antigen 1A (spag1a) from Danio rerio (Zebrafish).